Here is a 193-residue protein sequence, read N- to C-terminus: Ion-translocating oxidoreductase complex subunit A (193 aa).

6 helical membrane-spanning segments follow: residues 5–25, 47–67, 72–92, 102–122, 134–154, and 171–191; these read LLLFVGTVLVNNFVLVKFLGL, FVMTLASICAWLIDTWILIPL, LRTLAFILVIAVVVQFTEMVV, LLGIFLPLITTNCAVLGVALL, ALYGFSAAVGFSLVMVLFAAI, and AIALITAGLMSLAFMGFSGLV.

This sequence belongs to the NqrDE/RnfAE family. As to quaternary structure, the complex is composed of six subunits: RsxA, RsxB, RsxC, RsxD, RsxE and RsxG.

It localises to the cell inner membrane. In terms of biological role, part of a membrane-bound complex that couples electron transfer with translocation of ions across the membrane. Required to maintain the reduced state of SoxR. The chain is Ion-translocating oxidoreductase complex subunit A from Salmonella agona (strain SL483).